The primary structure comprises 357 residues: ATP-dependent 6-phosphofructokinase 2 (357 aa).

ATP contacts are provided by residues Gly-12, 80 to 81 (KG), and 107 to 110 (GDGS). Asp-108 provides a ligand contact to Mg(2+). Substrate is bound by residues 131-133 (TID), Arg-168, 175-177 (MGR), Glu-229, Arg-272, and 278-281 (HIQR). The Proton acceptor role is filled by Asp-133.

It belongs to the phosphofructokinase type A (PFKA) family. Mixed-substrate PFK group III subfamily. Homodimer or homotetramer. Mg(2+) is required as a cofactor.

It localises to the cytoplasm. It carries out the reaction beta-D-fructose 6-phosphate + ATP = beta-D-fructose 1,6-bisphosphate + ADP + H(+). It functions in the pathway carbohydrate degradation; glycolysis; D-glyceraldehyde 3-phosphate and glycerone phosphate from D-glucose: step 3/4. Subject to allosteric activation by ADP and other diphosphonucleosides, and inhibition by phosphoenolpyruvate. Catalyzes the phosphorylation of D-fructose 6-phosphate to fructose 1,6-bisphosphate by ATP, the first committing step of glycolysis. In Nostoc sp. (strain PCC 7120 / SAG 25.82 / UTEX 2576), this protein is ATP-dependent 6-phosphofructokinase 2.